A 101-amino-acid chain; its full sequence is Phosphoribosyl-AMP cyclohydrolase (101 aa).

Asp71 contributes to the Mg(2+) binding site. Cys72 contributes to the Zn(2+) binding site. Mg(2+)-binding residues include Asp73 and Asp75. Zn(2+)-binding residues include Cys88 and Cys95.

It belongs to the PRA-CH family. Homodimer. Mg(2+) serves as cofactor. The cofactor is Zn(2+).

Its subcellular location is the cytoplasm. The enzyme catalyses 1-(5-phospho-beta-D-ribosyl)-5'-AMP + H2O = 1-(5-phospho-beta-D-ribosyl)-5-[(5-phospho-beta-D-ribosylamino)methylideneamino]imidazole-4-carboxamide. It participates in amino-acid biosynthesis; L-histidine biosynthesis; L-histidine from 5-phospho-alpha-D-ribose 1-diphosphate: step 3/9. Functionally, catalyzes the hydrolysis of the adenine ring of phosphoribosyl-AMP. The protein is Phosphoribosyl-AMP cyclohydrolase of Bacillus cereus (strain G9842).